A 351-amino-acid chain; its full sequence is Protein Wnt-4 (351 aa).

The signal sequence occupies residues 1-22; sequence MSPEYFLRSLLLIILATFSANA. N-linked (GlcNAc...) asparagine glycosylation is found at Asn-21 and Asn-88. 11 cysteine pairs are disulfide-bonded: Cys-78/Cys-89, Cys-128/Cys-136, Cys-138/Cys-155, Cys-206/Cys-220, Cys-208/Cys-215, Cys-280/Cys-311, Cys-296/Cys-306, Cys-310/Cys-350, Cys-326/Cys-341, Cys-328/Cys-338, and Cys-333/Cys-334. The O-palmitoleoyl serine; by PORCN moiety is linked to residue Ser-212. N-linked (GlcNAc...) asparagine glycosylation occurs at Asn-297.

Belongs to the Wnt family. Interacts with CPZ. Palmitoleoylation is required for efficient binding to frizzled receptors. Depalmitoleoylation leads to Wnt signaling pathway inhibition. In terms of tissue distribution, predominantly expressed in the diencephalon neuromere D2.

It localises to the secreted. It is found in the extracellular space. The protein localises to the extracellular matrix. Functionally, ligand for members of the frizzled family of seven transmembrane receptors. Plays an important role in embryonic development. This chain is Protein Wnt-4 (WNT4), found in Gallus gallus (Chicken).